Consider the following 225-residue polypeptide: Small ribosomal subunit protein uS3 (225 aa).

Residues 38 to 106 (IRKFIQSRFS…PVNLNIIEVK (69 aa)) form the KH type-2 domain.

Belongs to the universal ribosomal protein uS3 family. In terms of assembly, part of the 30S ribosomal subunit. Forms a tight complex with proteins S10 and S14.

Functionally, binds the lower part of the 30S subunit head. Binds mRNA in the 70S ribosome, positioning it for translation. This chain is Small ribosomal subunit protein uS3, found in Leptospira borgpetersenii serovar Hardjo-bovis (strain JB197).